The following is a 491-amino-acid chain: Lysine--tRNA ligase 1 (491 aa).

Mg(2+) is bound by residues glutamate 400 and glutamate 407.

Belongs to the class-II aminoacyl-tRNA synthetase family. Homodimer. Mg(2+) serves as cofactor.

It localises to the cytoplasm. The enzyme catalyses tRNA(Lys) + L-lysine + ATP = L-lysyl-tRNA(Lys) + AMP + diphosphate. This Mycoplasmopsis pulmonis (strain UAB CTIP) (Mycoplasma pulmonis) protein is Lysine--tRNA ligase 1.